A 258-amino-acid polypeptide reads, in one-letter code: MKFNRMTLIASPTPKAQKAAEELKKLYQWYPLEEADVIIALGGDGFMLQTLHHLLDNSFNLPVFGMNLGTVGFLMNEWRPSNLLRRLIRAKQFTVYPLRMDGQTVSGEQKIYRAINEVSMLRETRQTAHLEISVDGRIVLPELVSDGVLVATPAGSTAYNLSADGPILPFDSGMLALTPISPFRPRRWRGAIVPDGSIIDMRVVDPDKRPMSAVADQRELREIANVTITLDRTTPLHLLFDPNHALDDRIAREQFRLC.

The Proton acceptor role is filled by Asp44. Residues 44 to 45 (DG), 116 to 117 (NE), Asp146, Ala154, and 157 to 162 (TAYNLS) each bind NAD(+).

Belongs to the NAD kinase family. The cofactor is a divalent metal cation.

The protein resides in the cytoplasm. The catalysed reaction is NAD(+) + ATP = ADP + NADP(+) + H(+). Involved in the regulation of the intracellular balance of NAD and NADP, and is a key enzyme in the biosynthesis of NADP. Catalyzes specifically the phosphorylation on 2'-hydroxyl of the adenosine moiety of NAD to yield NADP. The chain is NAD kinase from Zymomonas mobilis subsp. mobilis (strain ATCC 31821 / ZM4 / CP4).